The following is a 444-amino-acid chain: Zinc protease PqqE (444 aa).

The first 28 residues, Met1–Ser28, serve as a signal peptide directing secretion. Position 78 (His78) interacts with Zn(2+). The Proton acceptor role is filled by Glu81. His82 and Glu158 together coordinate Zn(2+).

Belongs to the peptidase M16 family. It depends on Zn(2+) as a cofactor.

The protein localises to the secreted. Its activity is regulated as follows. Can function alone, but full activity requires the presence of the non-peptidase homolog YmxG. Virulence factor that cleaves the cytoplasmic domain of the human junctional adhesion molecule A (JAM-A), compromising gastric epithelial barrier function and cell-cell adhesion. Cleavage of JAM-A occurs after Ala-285 or, to a lesser extent, before Ala-285. The polypeptide is Zinc protease PqqE (Helicobacter pylori (strain ATCC 700392 / 26695) (Campylobacter pylori)).